The chain runs to 233 residues: Leucyl/phenylalanyl-tRNA--protein transferase (233 aa).

This sequence belongs to the L/F-transferase family.

The protein resides in the cytoplasm. It carries out the reaction N-terminal L-lysyl-[protein] + L-leucyl-tRNA(Leu) = N-terminal L-leucyl-L-lysyl-[protein] + tRNA(Leu) + H(+). The catalysed reaction is N-terminal L-arginyl-[protein] + L-leucyl-tRNA(Leu) = N-terminal L-leucyl-L-arginyl-[protein] + tRNA(Leu) + H(+). The enzyme catalyses L-phenylalanyl-tRNA(Phe) + an N-terminal L-alpha-aminoacyl-[protein] = an N-terminal L-phenylalanyl-L-alpha-aminoacyl-[protein] + tRNA(Phe). Functions in the N-end rule pathway of protein degradation where it conjugates Leu, Phe and, less efficiently, Met from aminoacyl-tRNAs to the N-termini of proteins containing an N-terminal arginine or lysine. The sequence is that of Leucyl/phenylalanyl-tRNA--protein transferase from Anaeromyxobacter dehalogenans (strain 2CP-C).